Consider the following 476-residue polypeptide: Glycogen synthase (476 aa).

Lysine 15 lines the ADP-alpha-D-glucose pocket.

The protein belongs to the glycosyltransferase 1 family. Bacterial/plant glycogen synthase subfamily.

It carries out the reaction [(1-&gt;4)-alpha-D-glucosyl](n) + ADP-alpha-D-glucose = [(1-&gt;4)-alpha-D-glucosyl](n+1) + ADP + H(+). Its pathway is glycan biosynthesis; glycogen biosynthesis. Its function is as follows. Synthesizes alpha-1,4-glucan chains using ADP-glucose. In Streptococcus sanguinis (strain SK36), this protein is Glycogen synthase.